A 389-amino-acid polypeptide reads, in one-letter code: Cytochrome b (389 aa).

The next 4 helical transmembrane spans lie at 32–52, 76–98, 113–133, and 179–199; these read FGSL…FLAM, WIVR…AHIG, LWSI…LGYV, and FFSL…AHFM. 2 residues coordinate heme b: His82 and His96. Residues His183 and His197 each contribute to the heme b site. His202 contributes to the a ubiquinone binding site. The next 4 helical transmembrane spans lie at 225-245, 289-309, 321-341, and 348-368; these read FIFK…VIVF, LLGV…PLTD, AMKF…WLGS, and YLEI…VIVP.

The protein belongs to the cytochrome b family. Fungal cytochrome b-c1 complex contains 10 subunits; 3 respiratory subunits, 2 core proteins and 5 low-molecular weight proteins. Cytochrome b-c1 complex is a homodimer. Heme b is required as a cofactor.

It localises to the mitochondrion inner membrane. Its function is as follows. Component of the ubiquinol-cytochrome c reductase complex (complex III or cytochrome b-c1 complex) that is part of the mitochondrial respiratory chain. The b-c1 complex mediates electron transfer from ubiquinol to cytochrome c. Contributes to the generation of a proton gradient across the mitochondrial membrane that is then used for ATP synthesis. The polypeptide is Cytochrome b (COB) (Strobilurus tenacellus).